The sequence spans 88 residues: Cell division topological specificity factor (88 aa).

The protein belongs to the MinE family.

In terms of biological role, prevents the cell division inhibition by proteins MinC and MinD at internal division sites while permitting inhibition at polar sites. This ensures cell division at the proper site by restricting the formation of a division septum at the midpoint of the long axis of the cell. The polypeptide is Cell division topological specificity factor (Cronobacter sakazakii (strain ATCC BAA-894) (Enterobacter sakazakii)).